A 433-amino-acid polypeptide reads, in one-letter code: Elongation factor 1-alpha (433 aa).

In terms of domain architecture, tr-type G spans 5–227 (KPHLNLVVIG…AFDFFKEPPR (223 aa)). A G1 region spans residues 14 to 21 (GHIDHGKS). Residue 14 to 21 (GHIDHGKS) coordinates GTP. Ser21 contacts Mg(2+). The interval 70-74 (GITID) is G2. The tract at residues 91-94 (DAPG) is G3. GTP contacts are provided by residues 91–95 (DAPGH) and 153–156 (NKMD). The segment at 153-156 (NKMD) is G4. A G5 region spans residues 192-194 (SAW).

This sequence belongs to the TRAFAC class translation factor GTPase superfamily. Classic translation factor GTPase family. EF-Tu/EF-1A subfamily.

It is found in the cytoplasm. It catalyses the reaction GTP + H2O = GDP + phosphate + H(+). Functionally, GTP hydrolase that promotes the GTP-dependent binding of aminoacyl-tRNA to the A-site of ribosomes during protein biosynthesis. The protein is Elongation factor 1-alpha of Thermofilum pendens (strain DSM 2475 / Hrk 5).